The following is a 158-amino-acid chain: Transcriptional regulator MraZ (158 aa).

SpoVT-AbrB domains are found at residues threonine 7–alanine 57 and alanine 86–alanine 129. The interval arginine 133–alanine 158 is disordered.

Belongs to the MraZ family. In terms of assembly, forms oligomers.

It is found in the cytoplasm. The protein resides in the nucleoid. This is Transcriptional regulator MraZ from Gluconacetobacter diazotrophicus (strain ATCC 49037 / DSM 5601 / CCUG 37298 / CIP 103539 / LMG 7603 / PAl5).